The chain runs to 346 residues: Dimethyladenosine transferase 1, mitochondrial (346 aa).

The transit peptide at 1–27 (MAASGKLSTCRLPPLPTIREIIKLLRL) directs the protein to the mitochondrion. L38, G63, E85, K86, D111, V112, and N141 together coordinate S-adenosyl-L-methionine.

It belongs to the class I-like SAM-binding methyltransferase superfamily. rRNA adenine N(6)-methyltransferase family. KsgA subfamily. Interacts with mitochondrial RNA polymerase POLRMT. Interacts with TFAM. Bound to the maturing mtSSU until the late stages of assembly. In terms of tissue distribution, ubiquitously expressed.

The protein resides in the mitochondrion. The catalysed reaction is adenosine(N)/adenosine(N+1) in rRNA + 4 S-adenosyl-L-methionine = N(6)-dimethyladenosine(N)/N(6)-dimethyladenosine(N+1) in rRNA + 4 S-adenosyl-L-homocysteine + 4 H(+). In terms of biological role, mitochondrial methyltransferase which uses S-adenosyl methionine to dimethylate two highly conserved adjacent adenosine residues (A1583 and A1584) within the loop of helix 45 at the 3-prime end of 12S rRNA, thereby regulating the assembly or stability of the small subunit of the mitochondrial ribosome. Also required for basal transcription of mitochondrial DNA, probably via its interaction with POLRMT and TFAM. Stimulates transcription independently of the methyltransferase activity. This is Dimethyladenosine transferase 1, mitochondrial from Homo sapiens (Human).